The following is a 466-amino-acid chain: ATP synthase subunit beta (466 aa).

Residue 148–155 (GGAGVGKT) participates in ATP binding.

The protein belongs to the ATPase alpha/beta chains family. F-type ATPases have 2 components, CF(1) - the catalytic core - and CF(0) - the membrane proton channel. CF(1) has five subunits: alpha(3), beta(3), gamma(1), delta(1), epsilon(1). CF(0) has three main subunits: a(1), b(2) and c(9-12). The alpha and beta chains form an alternating ring which encloses part of the gamma chain. CF(1) is attached to CF(0) by a central stalk formed by the gamma and epsilon chains, while a peripheral stalk is formed by the delta and b chains.

The protein resides in the cell inner membrane. It catalyses the reaction ATP + H2O + 4 H(+)(in) = ADP + phosphate + 5 H(+)(out). Its function is as follows. Produces ATP from ADP in the presence of a proton gradient across the membrane. The catalytic sites are hosted primarily by the beta subunits. The protein is ATP synthase subunit beta of Xylella fastidiosa (strain 9a5c).